Reading from the N-terminus, the 418-residue chain is Gamma-glutamyl phosphate reductase (418 aa).

It belongs to the gamma-glutamyl phosphate reductase family.

Its subcellular location is the cytoplasm. It catalyses the reaction L-glutamate 5-semialdehyde + phosphate + NADP(+) = L-glutamyl 5-phosphate + NADPH + H(+). The protein operates within amino-acid biosynthesis; L-proline biosynthesis; L-glutamate 5-semialdehyde from L-glutamate: step 2/2. Functionally, catalyzes the NADPH-dependent reduction of L-glutamate 5-phosphate into L-glutamate 5-semialdehyde and phosphate. The product spontaneously undergoes cyclization to form 1-pyrroline-5-carboxylate. The chain is Gamma-glutamyl phosphate reductase from Pelobacter propionicus (strain DSM 2379 / NBRC 103807 / OttBd1).